Consider the following 151-residue polypeptide: Large ribosomal subunit protein bL9 (151 aa).

The protein belongs to the bacterial ribosomal protein bL9 family.

Binds to the 23S rRNA. This chain is Large ribosomal subunit protein bL9, found in Prochlorococcus marinus (strain AS9601).